We begin with the raw amino-acid sequence, 318 residues long: Deoxyribose-phosphate aldolase (318 aa).

Asp-155 acts as the Proton donor/acceptor in catalysis. Lys-218 (schiff-base intermediate with acetaldehyde) is an active-site residue. The active-site Proton donor/acceptor is Lys-254.

The protein belongs to the DeoC/FbaB aldolase family. DeoC type 2 subfamily. As to quaternary structure, interacts with YBX1.

The protein resides in the cytoplasm. The protein localises to the cytoplasmic granule. It localises to the nucleus. It catalyses the reaction 2-deoxy-D-ribose 5-phosphate = D-glyceraldehyde 3-phosphate + acetaldehyde. Its pathway is carbohydrate degradation; 2-deoxy-D-ribose 1-phosphate degradation; D-glyceraldehyde 3-phosphate and acetaldehyde from 2-deoxy-alpha-D-ribose 1-phosphate: step 2/2. Catalyzes a reversible aldol reaction between acetaldehyde and D-glyceraldehyde 3-phosphate to generate 2-deoxy-D-ribose 5-phosphate. Participates in stress granule (SG) assembly. May allow ATP production from extracellular deoxyinosine in conditions of energy deprivation. This Bos taurus (Bovine) protein is Deoxyribose-phosphate aldolase (DERA).